A 1066-amino-acid chain; its full sequence is DNA primase (1066 aa).

Positions 694-727 (DGPSAGGDDGDGDWFPDAGGPGDEEWEEDTDPMD) are disordered. Positions 715–725 (GDEEWEEDTDP) are enriched in acidic residues. The CHC2-type zinc-finger motif lies at 995 to 1035 (CLRFKHGRASRATARTFLALSVGTNNRLCASLCQQCFATKC).

Belongs to the herpesviridae DNA primase family. As to quaternary structure, associates with the helicase and the primase-associated factor to form the helicase-primase factor.

The protein resides in the host nucleus. Functionally, essential component of the helicase/primase complex. Unwinds the DNA at the replication forks and generates single-stranded DNA for both leading and lagging strand synthesis. The primase initiates primer synthesis and thereby produces large amount of short RNA primers on the lagging strand that the polymerase elongates using dNTPs. The sequence is that of DNA primase from Human herpesvirus 2 (strain HG52) (HHV-2).